The chain runs to 132 residues: Long-chain acyl-CoA thioesterase FadM (132 aa).

Aspartate 13 is an active-site residue.

The protein belongs to the 4-hydroxybenzoyl-CoA thioesterase family. Homotetramer.

It catalyses the reaction (3E,5Z)-tetradecadienoyl-CoA + H2O = (3E,5Z)-tetradecadienoate + CoA + H(+). It carries out the reaction (3E,5Z)-dodecadienoyl-CoA + H2O = (3E,5Z)-dodecadienoate + CoA + H(+). The catalysed reaction is (9Z)-octadecenoyl-CoA + H2O = (9Z)-octadecenoate + CoA + H(+). The enzyme catalyses octadecanoyl-CoA + H2O = octadecanoate + CoA + H(+). It catalyses the reaction hexadecanoyl-CoA + H2O = hexadecanoate + CoA + H(+). It carries out the reaction (3S)-hydroxytetradecanoyl-CoA + H2O = (3S)-hydroxytetradecanoate + CoA + H(+). The catalysed reaction is tetradecanoyl-CoA + H2O = tetradecanoate + CoA + H(+). Its function is as follows. Long-chain acyl-CoA thioesterase that could be involved in beta-oxidation of fatty acids. Is most active with 3,5-tetradecadienoyl-CoA, a metabolite of oleic acid that is hydrolyzed during oleate beta-oxidation, but can also use other substrates such as 3,5-dodecadienoyl-CoA, 9-cis-octadecenoyl-CoA, octadecanoyl-CoA, hexadecanoyl-CoA, 3-hydroxytetradecanoyl-CoA and tetradecanoyl-CoA. This is Long-chain acyl-CoA thioesterase FadM from Escherichia coli (strain K12).